The primary structure comprises 167 residues: Small ribosomal subunit protein uS9 (167 aa).

Residues 1-41 are disordered; that stretch reads MNTEAVAPDVAEEEVLTSYTSESSASADDAPKKERPALTVS. Residues 17–26 are compositionally biased toward polar residues; sequence TSYTSESSAS.

It belongs to the universal ribosomal protein uS9 family.

The sequence is that of Small ribosomal subunit protein uS9 from Renibacterium salmoninarum (strain ATCC 33209 / DSM 20767 / JCM 11484 / NBRC 15589 / NCIMB 2235).